We begin with the raw amino-acid sequence, 493 residues long: Leucine-rich repeat-containing protein 14 (493 aa).

One copy of the LRR 1; degenerate repeat lies at Lys-111–Thr-146. One copy of the LRR 2; degenerate repeat lies at Arg-194 to Asp-218. The LRR 3; degenerate repeat unit spans residues Ala-219–Arg-246. An LRR 4; degenerate repeat occupies Phe-247–Arg-282. LRR repeat units follow at residues Phe-283 to Leu-307, Gln-308 to Lys-339, Lys-340 to Leu-360, Ala-364 to Gln-391, and Cys-392 to Asp-416.

The protein belongs to the PRAME family. LRRC14 subfamily. As to quaternary structure, interacts with IKBKB; disrupts IKBKB-IKBKG interaction preventing I-kappa-B-kinase (IKK) core complex formation and leading to a decrease of IKBKB phosphorylation and NF-kappaB activation. Interacts with CHUK.

The protein resides in the cytoplasm. Its function is as follows. Negatively regulates Toll-like receptor-mediated NF-kappa-B signaling by disrupting IKK core complex formation through interaction with IKBKB. In Homo sapiens (Human), this protein is Leucine-rich repeat-containing protein 14.